The primary structure comprises 226 residues: MPRPRKRQTGTAGPDRKKLSGKRTKTENSESTSVKLENSSLEMTTTFKNGGKNLSNYWLMKSEPESRLEKGIDMKFSIEDLKAQPKQTACWDGVRNYQARNFLRAMKLEDEAFFYHSNCKQPGIVGLMKIVKEAYPDHTQFEKSNPHYDPSSKEDDPKWSMVDVQFVRMMKRFIPLEELKTYHQAHKATGGPLKSMTLFTRQRLSVQPLTQEEFDFILSLEETEPS.

Residues 1–38 are disordered; it reads MPRPRKRQTGTAGPDRKKLSGKRTKTENSESTSVKLEN. The Nuclear localization signal motif lies at 5–10; it reads RKRQTG. Positions 14-28 are enriched in basic and acidic residues; the sequence is PDRKKLSGKRTKTEN. Residues 29–38 show a composition bias toward polar residues; that stretch reads SESTSVKLEN.

Post-translationally, phosphorylated. In terms of tissue distribution, expressed in the medulla containing mature thymocytes, but not the cortex having immature thymocytes (at protein level). Abundant expression seen in testis, liver, brain and kidney with lower levels of the expression in thymus, spleen, heart and stomach.

It localises to the nucleus. Functionally, specifically binds 5-hydroxymethylcytosine (5hmC), suggesting that it acts as a specific reader of 5hmC. The sequence is that of Thymocyte nuclear protein 1 (Thyn1) from Mus musculus (Mouse).